Reading from the N-terminus, the 278-residue chain is Small ribosomal subunit protein uS3 (278 aa).

One can recognise a KH type-2 domain in the interval 38–106 (IRKLLSKGME…QVQLNILEVK (69 aa)). A disordered region spans residues 213 to 278 (RQAQAAARAG…APAPAENQEG (66 aa)). Residues 214–223 (QAQAAARAGV) show a composition bias toward low complexity. Residues 232-253 (RGGERPSRGSRGDRPTRADRGG) are compositionally biased toward basic and acidic residues. Residues 259 to 278 (EATGAATEQAAPAPAENQEG) show a composition bias toward low complexity.

The protein belongs to the universal ribosomal protein uS3 family. Part of the 30S ribosomal subunit. Forms a tight complex with proteins S10 and S14.

Its function is as follows. Binds the lower part of the 30S subunit head. Binds mRNA in the 70S ribosome, positioning it for translation. The chain is Small ribosomal subunit protein uS3 from Nocardioides sp. (strain ATCC BAA-499 / JS614).